Here is a 258-residue protein sequence, read N- to C-terminus: Ferredoxin--NADP reductase (258 aa).

The FAD-binding FR-type domain occupies 2 to 102 (SNLNVERVLS…RKPTGTLVTS (101 aa)). Asp17 serves as a coordination point for NADP(+). Residues 51-54 (RAYS), 67-69 (FSI), 74-77 (GPLT), and Thr117 each bind FAD. NADP(+) is bound by residues 144–145 (VR), 181–182 (TR), and Arg190. 254-258 (AFVEK) is a binding site for FAD.

The protein belongs to the ferredoxin--NADP reductase type 1 family. In terms of assembly, monomer. The cofactor is FAD.

The catalysed reaction is 2 reduced [2Fe-2S]-[ferredoxin] + NADP(+) + H(+) = 2 oxidized [2Fe-2S]-[ferredoxin] + NADPH. Functionally, transports electrons between ferredoxin and NADPH. The sequence is that of Ferredoxin--NADP reductase from Azotobacter vinelandii.